Here is a 361-residue protein sequence, read N- to C-terminus: Myb/SANT-like DNA-binding domain-containing protein 7 (361 aa).

Positions 11 to 70 (RWSRQETRTLLSILGEAEYIQRLQTVHHNADVYQAVSKRMQQEGFRRTERQCRSKFKVLK) constitute a Myb-like domain. Disordered stretches follow at residues 174-198 (TSDL…SYSS) and 217-272 (RLGV…ARRR). 2 stretches are compositionally biased toward polar residues: residues 187 to 198 (AGCSQGTPSYSS) and 226 to 249 (PCTS…SSSR).

The chain is Myb/SANT-like DNA-binding domain-containing protein 7 from Homo sapiens (Human).